The chain runs to 425 residues: Serine--tRNA ligase (425 aa).

Residue T233–E235 coordinates L-serine. Residue R264–E266 coordinates ATP. E287 is an L-serine binding site. ATP is bound at residue E351–S354. S387 lines the L-serine pocket.

This sequence belongs to the class-II aminoacyl-tRNA synthetase family. Type-1 seryl-tRNA synthetase subfamily. As to quaternary structure, homodimer. The tRNA molecule binds across the dimer.

The protein resides in the cytoplasm. It catalyses the reaction tRNA(Ser) + L-serine + ATP = L-seryl-tRNA(Ser) + AMP + diphosphate + H(+). It carries out the reaction tRNA(Sec) + L-serine + ATP = L-seryl-tRNA(Sec) + AMP + diphosphate + H(+). The protein operates within aminoacyl-tRNA biosynthesis; selenocysteinyl-tRNA(Sec) biosynthesis; L-seryl-tRNA(Sec) from L-serine and tRNA(Sec): step 1/1. Catalyzes the attachment of serine to tRNA(Ser). Is also able to aminoacylate tRNA(Sec) with serine, to form the misacylated tRNA L-seryl-tRNA(Sec), which will be further converted into selenocysteinyl-tRNA(Sec). This chain is Serine--tRNA ligase, found in Clostridium perfringens (strain SM101 / Type A).